A 358-amino-acid polypeptide reads, in one-letter code: Probable protein phosphatase 2C 68 (358 aa).

The region spanning 74–352 (RHGAASVAGR…DNISVVVVDL (279 aa)) is the PPM-type phosphatase domain. Residues D117, G118, D298, and D343 each coordinate Mn(2+).

It belongs to the PP2C family. It depends on Mg(2+) as a cofactor. The cofactor is Mn(2+).

It localises to the nucleus. It is found in the cytoplasm. The protein resides in the cytosol. It catalyses the reaction O-phospho-L-seryl-[protein] + H2O = L-seryl-[protein] + phosphate. The catalysed reaction is O-phospho-L-threonyl-[protein] + H2O = L-threonyl-[protein] + phosphate. Involved in the regulation of abiotic stress responses. Acts as a negative regulator of abscisic acid (ABA) signaling and positive regulator of abiotic stress signaling. May be involved in panicle development. The sequence is that of Probable protein phosphatase 2C 68 from Oryza sativa subsp. japonica (Rice).